Reading from the N-terminus, the 402-residue chain is MADVYLDNNATTRVDDEIVQAMLPFFTEQFGNPSSLHSFGNQVGMALKKARQSVQKLLGAEHDSEILFTSCGTESDSTAILSALKAQPERKTVITTVVEHPAVLSLCDYLASEGYTVHKLPVDKKGRLDLEHYASLLTDDVAVVSVMWANNETGTLFPIEEMARLADDAGIMFHTDAVQAVGKVPIDLKNSSIHMLSLCGHKLHAPKGVGVLYLRRGTRFRPLLRGGHQERGRRAGTENAASIIGLGVAAERALQFMEHENTEVNALRDKLEAGILAVVPHAFVTGDPDNRLPNTANIAFEYIEGEAILLLLNKVGIAASSGSACTSGSLEPSHVMRAMDIPYTAAHGTVRFSLSRYTTEEEIDRVIREVPPIVAQLRNVSPYWSGNGPVEDPGKAFAPVYG.

Pyridoxal 5'-phosphate contacts are provided by residues glycine 72–threonine 73, asparagine 151, glutamine 179, and cysteine 199–histidine 201. An N6-(pyridoxal phosphate)lysine modification is found at lysine 202. Residue threonine 237 coordinates pyridoxal 5'-phosphate. Residue cysteine 325 is the Cysteine persulfide intermediate of the active site. Residue cysteine 325 coordinates [2Fe-2S] cluster.

It belongs to the class-V pyridoxal-phosphate-dependent aminotransferase family. NifS/IscS subfamily. As to quaternary structure, homodimer. It depends on pyridoxal 5'-phosphate as a cofactor.

It carries out the reaction (sulfur carrier)-H + L-cysteine = (sulfur carrier)-SH + L-alanine. Inhibited by equimolar concentrations of p-chloromercuribenzoic acid, iodoacetamide or N-ethylmaleimide. In terms of biological role, catalyzes the removal of elemental sulfur atoms from cysteine to produce alanine. Seems to participate in the biosynthesis of the nitrogenase metalloclusters by providing the inorganic sulfur required for the Fe-S core formation. The polypeptide is Cysteine desulfurase NifS (Azotobacter vinelandii).